The chain runs to 538 residues: Efflux pump radE (538 aa).

3 stretches are compositionally biased toward basic and acidic residues: residues 1–12, 20–35, and 65–74; these read MATSRDFGREPP, EAGH…VSEH, and DPKEEERDPN. Disordered stretches follow at residues 1–35 and 65–90; these read MATS…VSEH and DPKE…PQNW. The next 12 membrane-spanning stretches (helical) occupy residues 100 to 120, 134 to 154, 163 to 183, 194 to 214, 225 to 245, 253 to 273, 327 to 347, 362 to 382, 409 to 429, 436 to 456, 482 to 502, and 505 to 525; these read AVLS…APGI, LATF…LVLA, VVIY…CALS, FLCG…IADL, SVWS…GGFL, WIFW…LLVL, PICL…YFMI, EGIV…GVVV, IPPT…YGWT, WAVP…INIS, IFGA…GLGW, and SLLA…FYYG.

The protein belongs to the major facilitator superfamily.

Its subcellular location is the cell membrane. Efflux pump that might be required for efficient secretion of radicicol or other secondary metabolies produced by the radicicol gene cluster. In Floropilus chiversii (Chaetomium chiversii), this protein is Efflux pump radE.